The chain runs to 229 residues: Potassium/proton antiporter CemA (229 aa).

The next 3 membrane-spanning stretches (helical) occupy residues 6-26 (AFIP…ISLC), 107-127 (ILHF…SFWG), and 189-209 (ILSG…KYWI).

Belongs to the CemA family.

The protein resides in the plastid. Its subcellular location is the chloroplast inner membrane. It carries out the reaction K(+)(in) + H(+)(out) = K(+)(out) + H(+)(in). Contributes to K(+)/H(+) antiport activity by supporting proton efflux to control proton extrusion and homeostasis in chloroplasts in a light-dependent manner to modulate photosynthesis. Prevents excessive induction of non-photochemical quenching (NPQ) under continuous-light conditions. Indirectly promotes efficient inorganic carbon uptake into chloroplasts. In Barbarea verna (Land cress), this protein is Potassium/proton antiporter CemA.